Reading from the N-terminus, the 709-residue chain is Polyribonucleotide nucleotidyltransferase (709 aa).

Positions 485 and 491 each coordinate Mg(2+). Residues 552 to 611 (PRIYTMKIDPKKIKDVIGKGGATIRSLTEETGTSIDIDDDGTVKIAAVDSNAAKNVMGRI) form the KH domain. In terms of domain architecture, S1 motif spans 621-689 (GAIYKGKVTR…RQGRIRLTMK (69 aa)).

Belongs to the polyribonucleotide nucleotidyltransferase family. As to quaternary structure, component of the RNA degradosome, which is a multiprotein complex involved in RNA processing and mRNA degradation. Mg(2+) is required as a cofactor.

Its subcellular location is the cytoplasm. It catalyses the reaction RNA(n+1) + phosphate = RNA(n) + a ribonucleoside 5'-diphosphate. In terms of biological role, involved in mRNA degradation. Catalyzes the phosphorolysis of single-stranded polyribonucleotides processively in the 3'- to 5'-direction. The polypeptide is Polyribonucleotide nucleotidyltransferase (Haemophilus influenzae (strain 86-028NP)).